The chain runs to 188 residues: Adenylate kinase (188 aa).

12 to 17 (GSGKTT) is an ATP binding site. Positions 33–62 (STGDLLRAEVASGSELGKKIDSFISKGNLV) are NMP. AMP-binding positions include Thr34, Arg39, 60-62 (NLV), 87-90 (GYPR), and Gln94. The tract at residues 129-135 (GRARGAD) is LID. Arg130 is an ATP binding site. Positions 132 and 144 each coordinate AMP. Arg172 lines the ATP pocket.

This sequence belongs to the adenylate kinase family. As to quaternary structure, monomer.

The protein resides in the cytoplasm. It catalyses the reaction AMP + ATP = 2 ADP. It functions in the pathway purine metabolism; AMP biosynthesis via salvage pathway; AMP from ADP: step 1/1. In terms of biological role, catalyzes the reversible transfer of the terminal phosphate group between ATP and AMP. Plays an important role in cellular energy homeostasis and in adenine nucleotide metabolism. The protein is Adenylate kinase of Campylobacter curvus (strain 525.92).